We begin with the raw amino-acid sequence, 190 residues long: MKLIIGLGNPEARYSNTRHNIGFEAVEALAAAFGAPFSKGKGKYLVAKIRHRGEQLMLVKPMTYMNLSGHAVVAAMNFHKALRSDILVICDDMNLPSGTLRLRSKGSAGGQNGLKHIIESLGSEEFARLRIGIGLEEKPQGGYSSFVLGKFSTDERNVMNRTLEVCTEAILDFAVNGISHAMNHYNKPVS.

Residue Tyr-14 participates in tRNA binding. His-19 acts as the Proton acceptor in catalysis. The tRNA site is built by Tyr-64, Asn-66, and Asn-112.

It belongs to the PTH family. In terms of assembly, monomer.

The protein resides in the cytoplasm. It carries out the reaction an N-acyl-L-alpha-aminoacyl-tRNA + H2O = an N-acyl-L-amino acid + a tRNA + H(+). Hydrolyzes ribosome-free peptidyl-tRNAs (with 1 or more amino acids incorporated), which drop off the ribosome during protein synthesis, or as a result of ribosome stalling. Its function is as follows. Catalyzes the release of premature peptidyl moieties from peptidyl-tRNA molecules trapped in stalled 50S ribosomal subunits, and thus maintains levels of free tRNAs and 50S ribosomes. The chain is Peptidyl-tRNA hydrolase from Chlorobium phaeovibrioides (strain DSM 265 / 1930) (Prosthecochloris vibrioformis (strain DSM 265)).